A 498-amino-acid chain; its full sequence is O-methyltransferase OME1 (498 aa).

Residues 1-19 show a composition bias toward polar residues; that stretch reads MSTMALHRTASTKSDTTMA. 2 disordered regions span residues 1–23 and 42–83; these read MSTM…CPNG and HRAE…QPEY. Low complexity predominate over residues 50–65; it reads SSTSSVSTTPTSPSFS. Residue D358 participates in S-adenosyl-L-methionine binding. H406 functions as the Proton acceptor in the catalytic mechanism.

It belongs to the class I-like SAM-binding methyltransferase superfamily. Cation-independent O-methyltransferase family.

It participates in secondary metabolite biosynthesis. In terms of biological role, O-methyltransferase; part of the gene cluster that mediates the biosynthesis of a tyrosine-derived cytochalasan acting as a fungal signal recognized by resistant rice plants and leads to avirulence in Pi33 resistant rice cultivars. The first step in the pathway is catalyzed by the hybrid PKS-NRPS ACE1, assisted by the enoyl reductase RAP1, that are responsible for fusion of the tyrosine precursor and the polyketide backbone. The polyketide synthase module (PKS) of ACE1 is responsible for the synthesis of the polyketide backbone and the downstream nonribosomal peptide synthetase (NRPS) amidates the carboxyl end of the polyketide with the tyrosine precursor. Because ACE1 lacks a designated enoylreductase (ER) domain, the required activity is provided the enoyl reductase RAP1. Reduction by the hydrolyase ORFZ, followed by dehydration and intra-molecular Diels-Alder cyclization by the Diels-Alderase ORF3 then yield the required isoindolone-fused macrocycle. A number of oxidative steps catalyzed by the tailoring enzymes identified within the cluster, including cytochrome P450 monooxygenases CYP1 to CYP4, the FAD-linked oxidoreductase OXR2 and the short-chain dehydrogenase/reductase OXR1, are further required to afford the final cytochalasans that confer avirulence and which have still to be identified. The monooxygenase CYP1 has been shown to be a site-selective C-18 hydroxylase whereas the function of CYP3 is the site-selective epoxidation of the C-6/C-7 olefin that is present in some intermediate compounds. Finally, SYN2 and RAP2 are not required for avirulence in Pi33 resistant rice cultivars. This Pyricularia oryzae (strain 70-15 / ATCC MYA-4617 / FGSC 8958) (Rice blast fungus) protein is O-methyltransferase OME1.